The primary structure comprises 399 residues: Probable 2-isopropylmalate synthase (399 aa).

One can recognise a Pyruvate carboxyltransferase domain in the interval 20 to 272; it reads VRIFDTTLRD…RTGVNTKLLY (253 aa). A divalent metal cation-binding residues include Asp29, His210, His212, and Asn246.

It belongs to the alpha-IPM synthase/homocitrate synthase family. In terms of assembly, homodimer. It depends on a divalent metal cation as a cofactor.

The catalysed reaction is 3-methyl-2-oxobutanoate + acetyl-CoA + H2O = (2S)-2-isopropylmalate + CoA + H(+). It functions in the pathway amino-acid biosynthesis; L-leucine biosynthesis; L-leucine from 3-methyl-2-oxobutanoate: step 1/4. Catalyzes the condensation of the acetyl group of acetyl-CoA with 3-methyl-2-oxobutanoate (2-oxoisovalerate) to form 3-carboxy-3-hydroxy-4-methylpentanoate (2-isopropylmalate). This Ignicoccus hospitalis (strain KIN4/I / DSM 18386 / JCM 14125) protein is Probable 2-isopropylmalate synthase (leuA).